The sequence spans 162 residues: MTAIQHFFKTFFLTELLKGLALTGRYTFRRKFTVQFPEEKTPISPRFRGLHALRRYENGEERCIACKLCEAVCPAMAITIESETRADNTRRTTRYDIDLTKCIFCGFCEESCPVDSIVETQILEYHGEKRGDLYFTKEMLLAVGDRYEKDIAAAKAADAPYR.

2 consecutive 4Fe-4S ferredoxin-type domains span residues 54-83 (RRYE…IESE) and 93-122 (TRYD…ETQI). Positions 63, 66, 69, 73, 102, 105, 108, and 112 each coordinate [4Fe-4S] cluster.

It belongs to the complex I 23 kDa subunit family. NDH-1 is composed of 14 different subunits. Subunits NuoA, H, J, K, L, M, N constitute the membrane sector of the complex. It depends on [4Fe-4S] cluster as a cofactor.

It localises to the cell inner membrane. It carries out the reaction a quinone + NADH + 5 H(+)(in) = a quinol + NAD(+) + 4 H(+)(out). Its function is as follows. NDH-1 shuttles electrons from NADH, via FMN and iron-sulfur (Fe-S) centers, to quinones in the respiratory chain. The immediate electron acceptor for the enzyme in this species is believed to be ubiquinone. Couples the redox reaction to proton translocation (for every two electrons transferred, four hydrogen ions are translocated across the cytoplasmic membrane), and thus conserves the redox energy in a proton gradient. The chain is NADH-quinone oxidoreductase subunit I from Burkholderia vietnamiensis (strain G4 / LMG 22486) (Burkholderia cepacia (strain R1808)).